A 421-amino-acid polypeptide reads, in one-letter code: Synaptotagmin-12 (421 aa).

Residues 1–18 lie on the Vesicular side of the membrane; that stretch reads MAVDVTEYHLSVIKSPPG. The chain crosses the membrane as a helical span at residues 19–39; that stretch reads WEVGVYAAGALALLGIAAVSL. Over 40 to 421 the chain is Cytoplasmic; that stretch reads WKLWTSGSFP…VSMWHPVRRN (382 aa). Serine 97 carries the phosphoserine; by PKA modification. Phosphoserine is present on residues serine 99 and serine 214. C2 domains are found at residues 152-272 and 283-416; these read TLGQ…SGWL and AVGE…SMWH.

It belongs to the synaptotagmin family. Homodimer. Can also form heterodimers. Interacts with SYT1. Post-translationally, phosphorylation of Ser-97 is required for mossy-fiber long-term potentiation. As to expression, expressed in the brain, specifically in neurons of the cerebellum, cortex, hippocampus, olfactory bulb, brainstem and spinal cord (at protein level).

It localises to the cytoplasmic vesicle. It is found in the secretory vesicle. Its subcellular location is the synaptic vesicle membrane. Synaptic vesicle phosphoprotein that enhances spontaneous neurotransmitter release but does not effect induced neurotransmitter release. Unlike other synaptotagmins, it does not bind Ca(2+) or phospholipids. Essential for mossy-fiber long-term potentiation in the hippocampus. The protein is Synaptotagmin-12 of Rattus norvegicus (Rat).